The following is a 189-amino-acid chain: MDRSVSLPHQPNKTTTVTLVETSSNPSGMVLVSPYQTNRVGDPMDLVSLAQQVQKGDEFIRANACNRLTVIADQIRYLQEQARKVLEDARKDAELHHAACNVVKKPGNMYYLYMRESGQRYFSILSPREWGASCPHKFLGGYKLQHDMSWTPQEDVEKRDAEIGIMDKLLNRQTALPACTEPNFEGLSQ.

This is an uncharacterized protein from Danio rerio (Zebrafish).